A 195-amino-acid chain; its full sequence is Imidazoleglycerol-phosphate dehydratase (195 aa).

The protein belongs to the imidazoleglycerol-phosphate dehydratase family.

Its subcellular location is the cytoplasm. The enzyme catalyses D-erythro-1-(imidazol-4-yl)glycerol 3-phosphate = 3-(imidazol-4-yl)-2-oxopropyl phosphate + H2O. It functions in the pathway amino-acid biosynthesis; L-histidine biosynthesis; L-histidine from 5-phospho-alpha-D-ribose 1-diphosphate: step 6/9. This Jannaschia sp. (strain CCS1) protein is Imidazoleglycerol-phosphate dehydratase.